The primary structure comprises 343 residues: UPF0157 protein YqkA (343 aa).

Residues 8–144 (KEATIAREIL…VKAAQGLLLS (137 aa)) form the N-acetyltransferase domain. Residues 135–343 (VKAAQGLLLS…ENDENGGFTL (209 aa)) form a UPF0157 region.

In the C-terminal section; belongs to the UPF0157 (GrpB) family.

This chain is UPF0157 protein YqkA (yqkA), found in Bacillus subtilis (strain 168).